A 142-amino-acid polypeptide reads, in one-letter code: MLNEFKEFIARGNVMDLAVGVIIGAAFSKIVDSVVNDLVMPVVGALTGGGFDFSDYFLPLSGNVTAQTLAAAREQGAVFAYGNFITVFINFLILAWIIFLLIKLVNRARASVEREKAPEPAAPPPQDILLLSEIRDLLKQRA.

Helical transmembrane passes span 14–34 (VMDL…VDSV) and 82–102 (GNFI…FLLI).

It belongs to the MscL family. As to quaternary structure, homopentamer.

Its subcellular location is the cell inner membrane. Its function is as follows. Channel that opens in response to stretch forces in the membrane lipid bilayer. May participate in the regulation of osmotic pressure changes within the cell. This chain is Large-conductance mechanosensitive channel, found in Sinorhizobium medicae (strain WSM419) (Ensifer medicae).